A 260-amino-acid polypeptide reads, in one-letter code: Global transcriptional regulator CodY (260 aa).

Residues 1–159 form a GAF domain region; it reads MPNLLEKTRK…SSTVVGIQLL (159 aa). The H-T-H motif DNA-binding region spans 207–226; that stretch reads ASVIADRIGITRSVIVNALR.

This sequence belongs to the CodY family.

It is found in the cytoplasm. DNA-binding global transcriptional regulator which is involved in the adaptive response to starvation and acts by directly or indirectly controlling the expression of numerous genes in response to nutrient availability. During rapid exponential growth, CodY is highly active and represses genes whose products allow adaptation to nutrient depletion. The polypeptide is Global transcriptional regulator CodY (Streptococcus uberis (strain ATCC BAA-854 / 0140J)).